A 195-amino-acid polypeptide reads, in one-letter code: Probable peroxygenase 4 (195 aa).

Residues 14 to 49 enclose the EF-hand domain; that stretch reads EEDNFLQRHVAFFDRNKDGIVYPSETFQGFRAIGCG. H22 provides a ligand contact to heme. Positions 27, 29, 31, and 38 each coordinate Ca(2+). The Proline-knot motif lies at 70–79; it reads PGKGFSIWFP. S177 bears the Phosphoserine mark.

This sequence belongs to the caleosin family. In terms of assembly, homodimer. Requires heme b as cofactor. It depends on Ca(2+) as a cofactor. Expressed in roots, leaves, stems, shoots, flowers and germinated seeds. Barely detected in dry seeds prior to germination. Preferentially expressed in vascular bundles and in guard cells.

The protein localises to the lipid droplet. It catalyses the reaction RH + ROOH = ROH + ROH.. Calcium-binding peroxygenase involved in the degradation of storage lipid in oil bodies. May be involved in the interaction between oil bodies and vacuoles during seed germination. Acts as a negative regulator of abscisic acid responses in non-seed tissues. This Arabidopsis thaliana (Mouse-ear cress) protein is Probable peroxygenase 4 (PXG4).